The chain runs to 336 residues: MSWFQKLMPRRIRTDAGPRSRSVPEGLWTKCESCQGILYRPDLERNLEVCPKCGAHMRISARQRLRLFLDESCEAVEIGAELQPSDFLRFRDSKRYRDRLNQAQKATGENDALVAMRGAVHQRPVVVCAFEFGFMGGSMGTIVGERFCRAAEEARANDIPLVCFSASGGARMQEALFSLMQMAKTSAAISRLNEARVPYISVLTDPTMGGVSASLATLGDVIIAEPGALIGFAGPRVIEQTVRETLPEGFQRAEFLLDHGAIDMIVDRRDMRDEIASLMGKLGGDVSVAPAPAPAATVDPEPESAEPEAPAEEAGPAGAAGDQAGESQDEGDPRNA.

Positions leucine 27 to threonine 297 constitute a CoA carboxyltransferase N-terminal domain. Zn(2+) contacts are provided by cysteine 31, cysteine 34, cysteine 50, and cysteine 53. Residues cysteine 31–cysteine 53 form a C4-type zinc finger. The tract at residues serine 287–alanine 336 is disordered. Residues proline 300 to alanine 311 show a composition bias toward acidic residues. Over residues glutamate 312–glutamate 326 the composition is skewed to low complexity.

It belongs to the AccD/PCCB family. As to quaternary structure, acetyl-CoA carboxylase is a heterohexamer composed of biotin carboxyl carrier protein (AccB), biotin carboxylase (AccC) and two subunits each of ACCase subunit alpha (AccA) and ACCase subunit beta (AccD). Zn(2+) is required as a cofactor.

The protein resides in the cytoplasm. The catalysed reaction is N(6)-carboxybiotinyl-L-lysyl-[protein] + acetyl-CoA = N(6)-biotinyl-L-lysyl-[protein] + malonyl-CoA. It functions in the pathway lipid metabolism; malonyl-CoA biosynthesis; malonyl-CoA from acetyl-CoA: step 1/1. Functionally, component of the acetyl coenzyme A carboxylase (ACC) complex. Biotin carboxylase (BC) catalyzes the carboxylation of biotin on its carrier protein (BCCP) and then the CO(2) group is transferred by the transcarboxylase to acetyl-CoA to form malonyl-CoA. The sequence is that of Acetyl-coenzyme A carboxylase carboxyl transferase subunit beta from Halorhodospira halophila (strain DSM 244 / SL1) (Ectothiorhodospira halophila (strain DSM 244 / SL1)).